The chain runs to 524 residues: Probable aminopeptidase NPEPL1 (524 aa).

Residues K260 and D265 each coordinate Zn(2+). K272 is an active-site residue. Positions 283, 342, and 344 each coordinate Zn(2+). R346 is an active-site residue.

It belongs to the peptidase M17 family. Requires Zn(2+) as cofactor. The cofactor is Mn(2+).

Probably catalyzes the removal of unsubstituted N-terminal amino acids from various peptides. The sequence is that of Probable aminopeptidase NPEPL1 (Npepl1) from Mus musculus (Mouse).